A 265-amino-acid polypeptide reads, in one-letter code: Aliphatic sulfonates import ATP-binding protein SsuB 1 (265 aa).

Positions 31–255 (FAFKGVEKRF…RRGSAELARL (225 aa)) constitute an ABC transporter domain. Residue 63–70 (GKSGCGKS) participates in ATP binding.

Belongs to the ABC transporter superfamily. Aliphatic sulfonates importer (TC 3.A.1.17.2) family. In terms of assembly, the complex is composed of two ATP-binding proteins (SsuB), two transmembrane proteins (SsuC) and a solute-binding protein (SsuA).

Its subcellular location is the cell inner membrane. The enzyme catalyses ATP + H2O + aliphatic sulfonate-[sulfonate-binding protein]Side 1 = ADP + phosphate + aliphatic sulfonateSide 2 + [sulfonate-binding protein]Side 1.. Functionally, part of the ABC transporter complex SsuABC involved in aliphatic sulfonates import. Responsible for energy coupling to the transport system. The polypeptide is Aliphatic sulfonates import ATP-binding protein SsuB 1 (Mesorhizobium japonicum (strain LMG 29417 / CECT 9101 / MAFF 303099) (Mesorhizobium loti (strain MAFF 303099))).